The chain runs to 129 residues: Large ribosomal subunit protein uL22 (129 aa).

Belongs to the universal ribosomal protein uL22 family. In terms of assembly, part of the 50S ribosomal subunit.

Its function is as follows. This protein binds specifically to 23S rRNA; its binding is stimulated by other ribosomal proteins, e.g. L4, L17, and L20. It is important during the early stages of 50S assembly. It makes multiple contacts with different domains of the 23S rRNA in the assembled 50S subunit and ribosome. Functionally, the globular domain of the protein is located near the polypeptide exit tunnel on the outside of the subunit, while an extended beta-hairpin is found that lines the wall of the exit tunnel in the center of the 70S ribosome. The protein is Large ribosomal subunit protein uL22 of Beijerinckia indica subsp. indica (strain ATCC 9039 / DSM 1715 / NCIMB 8712).